Consider the following 529-residue polypeptide: uncharacterized protein (529 aa).

2 ABC transporter domains span residues 6 to 257 (LAIE…QKLL) and 287 to 526 (IRKG…RQLL). ATP is bound by residues 42-49 (GESGSGKS) and 319-326 (GESGSGKS).

It belongs to the ABC transporter superfamily.

This is an uncharacterized protein from Escherichia coli (strain K12).